The primary structure comprises 610 residues: Granule-bound starch synthase 1, chloroplastic/amyloplastic (610 aa).

The N-terminal 79 residues, 1–79 (MATVTASSNF…SKVKTAGKIV (79 aa)), are a transit peptide targeting the chloroplast. ADP-alpha-D-glucose is bound at residue K98. Positions 438–454 (TGKKKMEAQILELEEKF) form a coiled coil.

Belongs to the glycosyltransferase 1 family. Bacterial/plant glycogen synthase subfamily. In terms of assembly, interacts with PTST. This interaction is critical for the localization to starch granules. Expressed in roots, inflorescences, flowers, fruits and at much higher levels in leaves.

It is found in the plastid. The protein localises to the chloroplast. The catalysed reaction is an NDP-alpha-D-glucose + [(1-&gt;4)-alpha-D-glucosyl](n) = [(1-&gt;4)-alpha-D-glucosyl](n+1) + a ribonucleoside 5'-diphosphate + H(+). It participates in glycan biosynthesis; starch biosynthesis. Functionally, required for the synthesis of amylose. Destroyed as it is released from the starch granules during the night. The circadian expression is controlled by CCA1 and LHY transcription factors. This is Granule-bound starch synthase 1, chloroplastic/amyloplastic from Arabidopsis thaliana (Mouse-ear cress).